Reading from the N-terminus, the 238-residue chain is Probable transcriptional regulatory protein IL0164 (238 aa).

The protein belongs to the TACO1 family.

It localises to the cytoplasm. The sequence is that of Probable transcriptional regulatory protein IL0164 from Idiomarina loihiensis (strain ATCC BAA-735 / DSM 15497 / L2-TR).